We begin with the raw amino-acid sequence, 640 residues long: Asparagine synthetase domain-containing protein 1 (640 aa).

The active-site For GATase activity is cysteine 2. A Glutamine amidotransferase type-2 domain is found at 2–184 (CGICCAVSFS…ASGIFRIDLK (183 aa)). Residues 286–602 (QFIGVLSTAV…GLTASALLPK (317 aa)) enclose the Asparagine synthetase domain.

This is Asparagine synthetase domain-containing protein 1 (ASNSD1) from Bos taurus (Bovine).